The sequence spans 266 residues: MEFVKLQCNICFSVAEIKNYFMQPIDRLTMIPVLELDTCKHQLCSMCIRKIRKRKKTPCPLCRVESLHFNVYSINRNVVDVIKCSVTSVAQWNKINGNFDAASLASVLFEKSLLDDAEDSNNAANSDDTMLSESQAILKKLQADIAEQTQLNIKRQLDLNKLQQTSVFMQEKLHRIKNDYNNMHKSFKELQLKRISTEKALKSLNDDYAKLAAKNARLSNENKVLSNKNIELIKHKNLLQNEYTTLQSYKCITNSTITTNVTINVD.

The RING-type zinc-finger motif lies at 8 to 63 (CNICFSVAEIKNYFMQPIDRLTMIPVLELDTCKHQLCSMCIRKIRKRKKTPCPLCR).

It localises to the host nucleus. Functionally, plays a role in the proper expression of late and very late genes. The sequence is that of Zinc finger protein CG30 (CG30) from Bombyx mori nuclear polyhedrosis virus (BmNPV).